Here is a 148-residue protein sequence, read N- to C-terminus: Pseudoazurin (148 aa).

Residues 1–25 (MMIFRALIAAATLAIAIATTLPAAA) form the signal peptide. Residues 30–118 (VKMLNSGPGG…MGMVALVVVG (89 aa)) form the Plastocyanin-like domain. Cu cation is bound by residues His-65, Cys-103, His-106, and Met-111.

Requires Cu cation as cofactor.

It is found in the periplasm. The protein is Pseudoazurin of Methylorubrum extorquens (strain ATCC 14718 / DSM 1338 / JCM 2805 / NCIMB 9133 / AM1) (Methylobacterium extorquens).